Consider the following 141-residue polypeptide: Hemoglobin subunit alpha (141 aa).

Residues 1–141 (VLSPADKTNV…VSTVLTSKYR (141 aa)) form the Globin domain. Position 3 is a phosphoserine (serine 3). Lysine 7 carries the N6-succinyllysine modification. A Phosphothreonine modification is found at threonine 8. Lysine 11 is subject to N6-succinyllysine. The residue at position 16 (lysine 16) is an N6-acetyllysine; alternate. Lysine 16 is modified (N6-succinyllysine; alternate). Phosphoserine is present on serine 35. An N6-succinyllysine modification is found at lysine 40. O2 is bound at residue histidine 58. Residue histidine 87 participates in heme b binding. Residue serine 102 is modified to Phosphoserine. Threonine 108 carries the post-translational modification Phosphothreonine. Residues serine 124 and serine 131 each carry the phosphoserine modification. Phosphothreonine is present on residues threonine 134 and threonine 137. A Phosphoserine modification is found at serine 138.

Belongs to the globin family. As to quaternary structure, heterotetramer of two alpha chains and two beta chains. Red blood cells.

Functionally, involved in oxygen transport from the lung to the various peripheral tissues. Its function is as follows. Hemopressin acts as an antagonist peptide of the cannabinoid receptor CNR1. Hemopressin-binding efficiently blocks cannabinoid receptor CNR1 and subsequent signaling. This is Hemoglobin subunit alpha (HBA) from Physeter macrocephalus (Sperm whale).